The following is a 334-amino-acid chain: Beta-hexosaminidase (334 aa).

Substrate is bound by residues Asp-60, Arg-68, Arg-133, and 163 to 164 (KH). The active-site Proton donor/acceptor is the His-176. The active-site Nucleophile is the Asp-247.

Belongs to the glycosyl hydrolase 3 family. NagZ subfamily.

The protein localises to the cytoplasm. It catalyses the reaction Hydrolysis of terminal non-reducing N-acetyl-D-hexosamine residues in N-acetyl-beta-D-hexosaminides.. The protein operates within cell wall biogenesis; peptidoglycan recycling. Plays a role in peptidoglycan recycling by cleaving the terminal beta-1,4-linked N-acetylglucosamine (GlcNAc) from peptide-linked peptidoglycan fragments, giving rise to free GlcNAc, anhydro-N-acetylmuramic acid and anhydro-N-acetylmuramic acid-linked peptides. In Xanthomonas oryzae pv. oryzae (strain KACC10331 / KXO85), this protein is Beta-hexosaminidase.